Consider the following 181-residue polypeptide: ATP synthase subunit delta (181 aa).

Belongs to the ATPase delta chain family. As to quaternary structure, F-type ATPases have 2 components, F(1) - the catalytic core - and F(0) - the membrane proton channel. F(1) has five subunits: alpha(3), beta(3), gamma(1), delta(1), epsilon(1). F(0) has three main subunits: a(1), b(2) and c(10-14). The alpha and beta chains form an alternating ring which encloses part of the gamma chain. F(1) is attached to F(0) by a central stalk formed by the gamma and epsilon chains, while a peripheral stalk is formed by the delta and b chains.

The protein resides in the cell membrane. Its function is as follows. F(1)F(0) ATP synthase produces ATP from ADP in the presence of a proton or sodium gradient. F-type ATPases consist of two structural domains, F(1) containing the extramembraneous catalytic core and F(0) containing the membrane proton channel, linked together by a central stalk and a peripheral stalk. During catalysis, ATP synthesis in the catalytic domain of F(1) is coupled via a rotary mechanism of the central stalk subunits to proton translocation. Functionally, this protein is part of the stalk that links CF(0) to CF(1). It either transmits conformational changes from CF(0) to CF(1) or is implicated in proton conduction. The sequence is that of ATP synthase subunit delta from Mycoplasma capricolum subsp. capricolum (strain California kid / ATCC 27343 / NCTC 10154).